Reading from the N-terminus, the 546-residue chain is Chaperonin GroEL (546 aa).

ATP contacts are provided by residues 30 to 33, K51, 87 to 91, G415, 479 to 481, and D495; these read TLGP, DGTTT, and NAA. The interval 526–546 is disordered; sequence KEDAPMPGGMPGGMGGMGMDM. Gly residues predominate over residues 534-546; that stretch reads GMPGGMGGMGMDM.

This sequence belongs to the chaperonin (HSP60) family. As to quaternary structure, forms a cylinder of 14 subunits composed of two heptameric rings stacked back-to-back. Interacts with the co-chaperonin GroES.

Its subcellular location is the cytoplasm. It catalyses the reaction ATP + H2O + a folded polypeptide = ADP + phosphate + an unfolded polypeptide.. In terms of biological role, together with its co-chaperonin GroES, plays an essential role in assisting protein folding. The GroEL-GroES system forms a nano-cage that allows encapsulation of the non-native substrate proteins and provides a physical environment optimized to promote and accelerate protein folding. The polypeptide is Chaperonin GroEL (Burkholderia thailandensis).